Consider the following 93-residue polypeptide: Putative pterin-4-alpha-carbinolamine dehydratase (93 aa).

Belongs to the pterin-4-alpha-carbinolamine dehydratase family.

The catalysed reaction is (4aS,6R)-4a-hydroxy-L-erythro-5,6,7,8-tetrahydrobiopterin = (6R)-L-erythro-6,7-dihydrobiopterin + H2O. This is Putative pterin-4-alpha-carbinolamine dehydratase from Synechococcus sp. (strain WH7803).